A 140-amino-acid polypeptide reads, in one-letter code: Phosphatidylinositol N-acetylglucosaminyltransferase subunit GPI19 (140 aa).

Topologically, residues 1-12 (MYTKEYYWFSQY) are cytoplasmic. The chain crosses the membrane as a helical span at residues 13–33 (MIITSTLVLTIIWSILPSSLG). The Lumenal segment spans residues 34 to 52 (EAAPKQFINTLLDIFPQRR). A helical transmembrane segment spans residues 53–73 (WIITLESIMLMGMLCTYIGLL). Over 74–140 (MYNEDTLTPP…YLYDNDHTST (67 aa)) the chain is Cytoplasmic.

Belongs to the GPI19 family. In terms of assembly, component of the phosphatidylinositol N-acetylglucosaminyltransferase (GPI-GlcNAc transferase) complex composed of at least GPI1, GPI2, GPI3, GPI15, GPI19 and ERI1. Interacts with GPI2.

The protein resides in the endoplasmic reticulum membrane. The catalysed reaction is a 1,2-diacyl-sn-glycero-3-phospho-(1D-myo-inositol) + UDP-N-acetyl-alpha-D-glucosamine = a 6-(N-acetyl-alpha-D-glucosaminyl)-1-(1,2-diacyl-sn-glycero-3-phospho)-1D-myo-inositol + UDP + H(+). Its pathway is glycolipid biosynthesis; glycosylphosphatidylinositol-anchor biosynthesis. Functionally, part of the complex catalyzing the transfer of N-acetylglucosamine from UDP-N-acetylglucosamine to phosphatidylinositol, the first step of GPI biosynthesis. Involved in cell wall biosynthesis. The sequence is that of Phosphatidylinositol N-acetylglucosaminyltransferase subunit GPI19 (GPI19) from Saccharomyces cerevisiae (strain ATCC 204508 / S288c) (Baker's yeast).